Here is a 1043-residue protein sequence, read N- to C-terminus: Constitutive coactivator of PPAR-gamma-like protein 1 homolog (1043 aa).

Disordered regions lie at residues 353-497 and 929-1043; these read SMVP…HMQI and YGRG…NKEE. Polar residues-rich tracts occupy residues 362 to 375 and 405 to 419; these read QMLNIPQGSVQSRP and SPINPAQSGSPNHVD. Basic and acidic residues-rich tracts occupy residues 451–471 and 951–964; these read TWDKGKKSEKANKKDSTEQAK and EVAKELKTQSEDSK. Positions 801-1043 are RNA binding; the sequence is VELATKVEKM…LEGAVANKEE (243 aa). Residues 995–1010 show a composition bias toward low complexity; the sequence is EARASSNSESALSSDS.

It belongs to the constitutive coactivator of PPAR-gamma family.

It localises to the cytoplasm. Its subcellular location is the cell membrane. Functionally, may bee involved in the oxidative stress-induced survival signaling. Binds RNA. May participate in mRNA transport in the cytoplasm. The chain is Constitutive coactivator of PPAR-gamma-like protein 1 homolog (fam120a) from Xenopus tropicalis (Western clawed frog).